Here is a 332-residue protein sequence, read N- to C-terminus: Thiamine thiazole synthase (332 aa).

Substrate-binding positions include Cys87, 108 to 109 (EA), Gly116, and Val184. Cys221 is subject to 2,3-didehydroalanine (Cys). Substrate-binding positions include Asp223, His238, Met290, and 300-302 (RMG).

This sequence belongs to the THI4 family. In terms of assembly, homooctamer. It depends on Fe cation as a cofactor. Post-translationally, during the catalytic reaction, a sulfide is transferred from Cys-221 to a reaction intermediate, generating a dehydroalanine residue.

Its subcellular location is the cytoplasm. It is found in the nucleus. The catalysed reaction is [ADP-thiazole synthase]-L-cysteine + glycine + NAD(+) = [ADP-thiazole synthase]-dehydroalanine + ADP-5-ethyl-4-methylthiazole-2-carboxylate + nicotinamide + 3 H2O + 2 H(+). Functionally, involved in biosynthesis of the thiamine precursor thiazole. Catalyzes the conversion of NAD and glycine to adenosine diphosphate 5-(2-hydroxyethyl)-4-methylthiazole-2-carboxylic acid (ADT), an adenylated thiazole intermediate. The reaction includes an iron-dependent sulfide transfer from a conserved cysteine residue of the protein to a thiazole intermediate. The enzyme can only undergo a single turnover, which suggests it is a suicide enzyme. May have additional roles in adaptation to various stress conditions and in DNA damage tolerance. The chain is Thiamine thiazole synthase from Aspergillus fumigatus (strain ATCC MYA-4609 / CBS 101355 / FGSC A1100 / Af293) (Neosartorya fumigata).